Consider the following 215-residue polypeptide: Large ribosomal subunit protein uL16 (215 aa).

The protein belongs to the universal ribosomal protein uL16 family. In terms of assembly, component of the small ribosomal subunit. Mature ribosomes consist of a small (40S) and a large (60S) subunit. The 40S subunit contains about 33 different proteins and 1 molecule of RNA (18S). The 60S subunit contains about 49 different proteins and 3 molecules of RNA (25S, 5.8S and 5S).

In Euglena gracilis, this protein is Large ribosomal subunit protein uL16 (RPL10).